Consider the following 406-residue polypeptide: Imidazolonepropionase (406 aa).

Fe(3+) contacts are provided by H72 and H74. Zn(2+)-binding residues include H72 and H74. 4-imidazolone-5-propanoate contacts are provided by R81, Y144, and H177. Residue Y144 participates in N-formimidoyl-L-glutamate binding. H242 is a Fe(3+) binding site. Position 242 (H242) interacts with Zn(2+). Residue Q245 participates in 4-imidazolone-5-propanoate binding. A Fe(3+)-binding site is contributed by D317. Zn(2+) is bound at residue D317. N319 and G321 together coordinate N-formimidoyl-L-glutamate. T322 serves as a coordination point for 4-imidazolone-5-propanoate.

This sequence belongs to the metallo-dependent hydrolases superfamily. HutI family. Requires Zn(2+) as cofactor. Fe(3+) serves as cofactor.

Its subcellular location is the cytoplasm. The catalysed reaction is 4-imidazolone-5-propanoate + H2O = N-formimidoyl-L-glutamate. It participates in amino-acid degradation; L-histidine degradation into L-glutamate; N-formimidoyl-L-glutamate from L-histidine: step 3/3. Catalyzes the hydrolytic cleavage of the carbon-nitrogen bond in imidazolone-5-propanoate to yield N-formimidoyl-L-glutamate. It is the third step in the universal histidine degradation pathway. This chain is Imidazolonepropionase, found in Yersinia pseudotuberculosis serotype O:1b (strain IP 31758).